A 723-amino-acid chain; its full sequence is MSLLKERKPKKPHYIPRPPGKPFKYKCFQCPFTCNEKSHLFNHMKYGLCKNSITLVSEQDRVPKCPKSNSLDPKQTNQPDATAKPASSKSVANGLSAFDSKLQHSSAREDIKENLELQARGTHRCLGQKPALHRASPCKSPAPEAALGAQPALEGAARPSAFVPVGEHRLKGPDNAEAPETLALHNPTAKAVSFHTKSAFHTPGYPWKAGSPFLPPEFPHKISSTKGLGAISPYMHPTIPEYPPHFYTEHGLATIYSPYLLAGSSPECDAPLLSVYGTQDPRHFLPHPGPIPKHLAPSPATYDHYRFFQQYPSNLPIPYGFYRPESAFSSYGLRLPPVTGLTRDQSSHLLEEATLVYPASSPSRLNPSDPNRKHVEFESPIPEAKDSSKAGQRDTEGSKMSPRAGSAATGSPGRPSPTDFMQTSQTCEGLYDLSNKAASSALGRLYPPEQSLTAFRPVKKSTECLPAQAAETTAESPVSLNVVNGDPPAPTGSASLVSEAAPSSPDDSSGMGPLNLSKKSEINLAATHEPTYQGSPQAETASFSELQDLPLNLSVKDPCNTQAPRPAFPGRPRAAEPAAAVPQKTGTEGSEDGPSHPETKPGSLDGDGAPPTGPGEEAPDACAVDSSEEQKQTAAVALCQLAAYSPRNIRVGDGDAAAPEPACRQDTPTLSSMESQEAQCDLRPKGQKRTSLRDAGKSQQGAKKAKLQDTARVFTLRRRARVS.

The segment at 25 to 51 adopts a CCHC-type zinc-finger fold; that stretch reads YKCFQCPFTCNEKSHLFNHMKYGLCKN. Residues C27, C30, H43, and C49 each coordinate Zn(2+). Disordered stretches follow at residues 64–91, 132–153, 359–427, 466–630, and 650–723; these read KCPKSNSLDPKQTNQPDATAKPASSKSV, LHRASPCKSPAPEAALGAQPAL, ASSP…SQTC, PAQA…SEEQ, and RVGD…ARVS. The span at 67-91 shows a compositional bias: polar residues; that stretch reads KSNSLDPKQTNQPDATAKPASSKSV. Over residues 360–369 the composition is skewed to polar residues; sequence SSPSRLNPSD. The segment covering 370–397 has biased composition (basic and acidic residues); it reads PNRKHVEFESPIPEAKDSSKAGQRDTEG. Polar residues predominate over residues 470–482; sequence AETTAESPVSLNV. The segment covering 500–509 has biased composition (low complexity); the sequence is AAPSSPDDSS. Positions 530-545 are enriched in polar residues; sequence PTYQGSPQAETASFSE. Low complexity-rich tracts occupy residues 563-582 and 606-616; these read APRPAFPGRPRAAEPAAAVP and GDGAPPTGPGE. The segment covering 666–678 has biased composition (polar residues); sequence DTPTLSSMESQEA.

In terms of tissue distribution, expressed in the skin, prostate, lung, placenta and thymus, and at low level in T-cells. Not expressed in peripheral blood leukocytes, pancreas and brain. Clearly expressed in primary keratinocytes but not in fibroblasts.

It is found in the nucleus. In terms of biological role, transcription factor involved in epidermis differentiation. Required for terminal epidermal differentiation: acts downstream of p63/TP63 and activates expression of late epidermal differentiation genes. Specifically binds to the promoter of KLF4 and promotes its expression. The protein is Zinc finger protein 750 (ZNF750) of Homo sapiens (Human).